Here is a 224-residue protein sequence, read N- to C-terminus: UPF0758 protein Rpic_2712 (224 aa).

The region spanning 102–224 (TFESAQSVKD…VYGFLEHGKM (123 aa)) is the MPN domain. Zn(2+)-binding residues include His-173, His-175, and Asp-186. The JAMM motif motif lies at 173–186 (HNHPTGNTEPSESD).

It belongs to the UPF0758 family.

The sequence is that of UPF0758 protein Rpic_2712 from Ralstonia pickettii (strain 12J).